We begin with the raw amino-acid sequence, 366 residues long: Ribosomal RNA large subunit methyltransferase M (366 aa).

Residues S188, 221–224, D240, D260, and D277 each bind S-adenosyl-L-methionine; that span reads CPGG. Catalysis depends on K306, which acts as the Proton acceptor.

Belongs to the class I-like SAM-binding methyltransferase superfamily. RNA methyltransferase RlmE family. RlmM subfamily. In terms of assembly, monomer.

Its subcellular location is the cytoplasm. The enzyme catalyses cytidine(2498) in 23S rRNA + S-adenosyl-L-methionine = 2'-O-methylcytidine(2498) in 23S rRNA + S-adenosyl-L-homocysteine + H(+). Its function is as follows. Catalyzes the 2'-O-methylation at nucleotide C2498 in 23S rRNA. In Shigella boydii serotype 4 (strain Sb227), this protein is Ribosomal RNA large subunit methyltransferase M.